A 555-amino-acid chain; its full sequence is Protein FAM234A (555 aa).

The span at 1–22 (MMDNKDLEAEIHPLKNEDKKSQ) shows a compositional bias: basic and acidic residues. The disordered stretch occupies residues 1–40 (MMDNKDLEAEIHPLKNEDKKSQENPGNLPRNEDNLKSKPV). Residues 1–49 (MMDNKDLEAEIHPLKNEDKKSQENPGNLPRNEDNLKSKPVPSRLSRCRT) lie on the Cytoplasmic side of the membrane. Position 21 is a phosphoserine (S21). The helical; Signal-anchor for type II membrane protein transmembrane segment at 50–70 (VAFFLSLFTCLFVVFVLSFII) threads the bilayer. Topologically, residues 71–555 (PCPDRPSSQG…FSRLRYRSEM (485 aa)) are extracellular. 5 N-linked (GlcNAc...) asparagine glycosylation sites follow: N116, N120, N317, N392, and N476.

The protein belongs to the FAM234 family.

Its subcellular location is the membrane. The protein is Protein FAM234A of Mus musculus (Mouse).